The sequence spans 107 residues: ATP-dependent Clp protease adapter protein ClpS (107 aa).

Belongs to the ClpS family. In terms of assembly, binds to the N-terminal domain of the chaperone ClpA.

Involved in the modulation of the specificity of the ClpAP-mediated ATP-dependent protein degradation. This chain is ATP-dependent Clp protease adapter protein ClpS, found in Syntrophus aciditrophicus (strain SB).